Consider the following 424-residue polypeptide: Phosphoribosylamine--glycine ligase (424 aa).

Residues 111–312 (KAFVKECGIK…LLDLFLATAK (202 aa)) form the ATP-grasp domain. 137–189 (IQNASFPLVIKALNKNTSIVHHQEEALKILEDALKQSNEPVIIEPFLEGFELS) contributes to the ATP binding site.

This sequence belongs to the GARS family.

It carries out the reaction 5-phospho-beta-D-ribosylamine + glycine + ATP = N(1)-(5-phospho-beta-D-ribosyl)glycinamide + ADP + phosphate + H(+). It participates in purine metabolism; IMP biosynthesis via de novo pathway; N(1)-(5-phospho-D-ribosyl)glycinamide from 5-phospho-alpha-D-ribose 1-diphosphate: step 2/2. The chain is Phosphoribosylamine--glycine ligase (purD) from Helicobacter pylori (strain J99 / ATCC 700824) (Campylobacter pylori J99).